We begin with the raw amino-acid sequence, 935 residues long: Ribonuclease E (935 aa).

In terms of domain architecture, S1 motif spans 39–119 (ANIYKGKITR…GNKGAALTTF (81 aa)). Mg(2+) is bound by residues Asp-302 and Asp-345. 2 residues coordinate Zn(2+): Cys-403 and Cys-406. The tract at residues 403–406 (CPRC) is required for zinc-mediated homotetramerization and catalytic activity. 2 disordered regions span residues 571-669 (TKSE…DLRK) and 698-743 (VQNN…KSPM). Basic and acidic residues-rich tracts occupy residues 593 to 625 (RSQD…ERNQ) and 701 to 719 (NDEK…ERQR). Over residues 720 to 734 (RTPRHLRAANNQRRR) the composition is skewed to basic residues.

The protein belongs to the RNase E/G family. RNase E subfamily. Component of the RNA degradosome, which is a multiprotein complex involved in RNA processing and mRNA degradation. Within the RNA degradosome, RNase E assembles into a homotetramer formed by a dimer of dimers. Zn(2+) is required as a cofactor. Mg(2+) serves as cofactor.

It is found in the cytoplasm. It localises to the cell inner membrane. It carries out the reaction Endonucleolytic cleavage of single-stranded RNA in A- and U-rich regions.. Endoribonuclease that plays a central role in RNA processing and decay. Required for the maturation of 5S and 16S rRNAs and the majority of tRNAs. Also involved in the degradation of most mRNAs. In Haemophilus influenzae (strain ATCC 51907 / DSM 11121 / KW20 / Rd), this protein is Ribonuclease E.